A 608-amino-acid polypeptide reads, in one-letter code: Extracellular metalloproteinase 5 (608 aa).

The N-terminal stretch at 1 to 20 (MHGLLLAAAGLLSLPLHVIA) is a signal peptide. Positions 21 to 244 (HPQPSTNLAG…VHNVVDYVSH (224 aa)) are excised as a propeptide. A glycan (N-linked (GlcNAc...) asparagine) is linked at N285. H427 is a binding site for Zn(2+). E428 is a catalytic residue. Position 431 (H431) interacts with Zn(2+). The N-linked (GlcNAc...) asparagine glycan is linked to N591.

It belongs to the peptidase M36 family. It depends on Zn(2+) as a cofactor.

The protein resides in the secreted. Its function is as follows. Secreted metalloproteinase probably acting as a virulence factor. The polypeptide is Extracellular metalloproteinase 5 (MEP5) (Trichophyton tonsurans (Scalp ringworm fungus)).